Here is an 89-residue protein sequence, read N- to C-terminus: MAHKKAGGSSKNGRDSNAQRRGVKRFGGQEVLAGNILVRQVGSKVHAGKNVGTGKDWTLFALVDGVVKYEKYIRKNRVKTRVHIVPAEA.

The disordered stretch occupies residues 1 to 26 (MAHKKAGGSSKNGRDSNAQRRGVKRF).

It belongs to the bacterial ribosomal protein bL27 family.

The sequence is that of Large ribosomal subunit protein bL27 from Maridesulfovibrio salexigens (strain ATCC 14822 / DSM 2638 / NCIMB 8403 / VKM B-1763) (Desulfovibrio salexigens).